A 315-amino-acid chain; its full sequence is Protein FRA10AC1 homolog (315 aa).

Met-1 carries the post-translational modification N-acetylmethionine. Residues 1 to 28 (MHGHGGYDSDFSDDEQGGGSSKKRKKTV) form a disordered region. Ser-9 and Ser-12 each carry phosphoserine. An N6-acetyllysine modification is found at Lys-36. The segment covering 225-235 (KEIKSTKKRSK) has biased composition (basic residues). The tract at residues 225–308 (KEIKSTKKRS…EKSQEEEFDD (84 aa)) is disordered. Residues 236-245 (TKTESDESPH) show a composition bias toward basic and acidic residues. Phosphoserine is present on residues Ser-251 and Ser-252. The segment covering 257 to 279 (SQGKDEGHSSSKRSEDSRNRNAG) has biased composition (basic and acidic residues). Ser-283 and Ser-285 each carry phosphoserine.

Interacts with ESS2.

It is found in the nucleus. In terms of biological role, may be involved in pre-mRNA splicing. In Rattus norvegicus (Rat), this protein is Protein FRA10AC1 homolog (Fra10ac1).